The primary structure comprises 250 residues: Small ribosomal subunit protein uS2 (250 aa).

Belongs to the universal ribosomal protein uS2 family.

The polypeptide is Small ribosomal subunit protein uS2 (Paraburkholderia phymatum (strain DSM 17167 / CIP 108236 / LMG 21445 / STM815) (Burkholderia phymatum)).